Reading from the N-terminus, the 278-residue chain is Bicarbonate transport system permease protein CmpB (278 aa).

7 consecutive transmembrane segments (helical) span residues 24–44 (LDGI…WQIF), 93–113 (VAQG…LVGL), 124–144 (LFQF…LVAF), 151–171 (AIFV…AEGV), 196–216 (VVLP…IGLS), 217–237 (WLAI…GFFI), and 249–269 (IILA…FVAW). Residues 86 to 267 (TIASLTRVAQ…AVGLLLDRFV (182 aa)) form the ABC transmembrane type-1 domain.

It belongs to the binding-protein-dependent transport system permease family. In terms of assembly, the complex is composed of two ATP-binding proteins (CmpC and CmpD), a transmembrane protein (CmpB) and a solute-binding protein (CmpA).

The protein localises to the cell inner membrane. Functionally, part of the ABC transporter complex CmpABCD involved in bicarbonate transport. Probably responsible for the translocation of the substrate across the membrane. The polypeptide is Bicarbonate transport system permease protein CmpB (cmpB) (Synechococcus sp. (strain ATCC 27144 / PCC 6301 / SAUG 1402/1) (Anacystis nidulans)).